A 276-amino-acid chain; its full sequence is Diaminopimelate epimerase (276 aa).

3 residues coordinate substrate: N11, Q44, and N64. Residue C73 is the Proton donor of the active site. Substrate contacts are provided by residues I74–N75, N159, N192, and E210–R211. C219 (proton acceptor) is an active-site residue. Position 220 to 221 (G220 to S221) interacts with substrate.

It belongs to the diaminopimelate epimerase family. As to quaternary structure, homodimer.

It localises to the cytoplasm. It catalyses the reaction (2S,6S)-2,6-diaminopimelate = meso-2,6-diaminopimelate. Its pathway is amino-acid biosynthesis; L-lysine biosynthesis via DAP pathway; DL-2,6-diaminopimelate from LL-2,6-diaminopimelate: step 1/1. In terms of biological role, catalyzes the stereoinversion of LL-2,6-diaminopimelate (L,L-DAP) to meso-diaminopimelate (meso-DAP), a precursor of L-lysine and an essential component of the bacterial peptidoglycan. This chain is Diaminopimelate epimerase, found in Wigglesworthia glossinidia brevipalpis.